The following is a 323-amino-acid chain: Annexin A3 (323 aa).

A2 is modified (N-acetylalanine). 4 Annexin repeats span residues 18-89 (FNPS…ALVT), 90-161 (PPAV…ILAN), 173-245 (QLAR…AIVR), and 249-320 (NTPA…KICG). K177 bears the N6-acetyllysine mark. T267 carries the phosphothreonine modification.

This sequence belongs to the annexin family.

Functionally, inhibitor of phospholipase A2, also possesses anti-coagulant properties. Also cleaves the cyclic bond of inositol 1,2-cyclic phosphate to form inositol 1-phosphate. In Bos taurus (Bovine), this protein is Annexin A3 (ANXA3).